A 276-amino-acid polypeptide reads, in one-letter code: NH(3)-dependent NAD(+) synthetase (276 aa).

39–46 (GLSGGVDS) is an ATP binding site. Residue Asp45 coordinates Mg(2+). Arg123 serves as a coordination point for deamido-NAD(+). Residue Thr143 coordinates ATP. Glu148 is a binding site for Mg(2+). 2 residues coordinate deamido-NAD(+): Lys156 and Asp163. ATP contacts are provided by Lys172 and Ser194. Position 254-255 (254-255 (HK)) interacts with deamido-NAD(+).

It belongs to the NAD synthetase family. Homodimer.

It carries out the reaction deamido-NAD(+) + NH4(+) + ATP = AMP + diphosphate + NAD(+) + H(+). It participates in cofactor biosynthesis; NAD(+) biosynthesis; NAD(+) from deamido-NAD(+) (ammonia route): step 1/1. Functionally, catalyzes the ATP-dependent amidation of deamido-NAD to form NAD. Uses ammonia as a nitrogen source. The polypeptide is NH(3)-dependent NAD(+) synthetase (Hyperthermus butylicus (strain DSM 5456 / JCM 9403 / PLM1-5)).